The chain runs to 682 residues: Serine/threonine-protein kinase PLK2 (682 aa).

A disordered region spans residues 25 to 67 (ACGGDSKKKRPQQPSEDGQPQAQVTPAAPHHHHHHSHSGPEIS). Positions 36 to 48 (QQPSEDGQPQAQV) are enriched in polar residues. Residues 79-331 (YCRGKVLGKG…LDDIIRHDFF (253 aa)) form the Protein kinase domain. ATP is bound by residues 85–93 (LGKGGFAKC) and Lys108. The active-site Proton acceptor is Asp202. Position 236 is a phosphothreonine (Thr236). Residues 403–432 (SITQQPSKHRADEEPQPPPTTVARSGTSAV) form a disordered region. POLO box domains are found at residues 500–578 (WVTK…YMEE) and 598–682 (YLLQ…QRCN).

Belongs to the protein kinase superfamily. Ser/Thr protein kinase family. CDC5/Polo subfamily. As to quaternary structure, interacts with NSF; causing NSF dissociation from GRIA2. Interacts with CIB1. Post-translationally, catalytic activity is enhanced by phosphorylation of Thr-236. Brain, lung and heart.

It is found in the cytoplasm. The protein localises to the cytoskeleton. Its subcellular location is the microtubule organizing center. It localises to the centrosome. The protein resides in the centriole. It is found in the cell projection. The protein localises to the dendrite. The enzyme catalyses L-seryl-[protein] + ATP = O-phospho-L-seryl-[protein] + ADP + H(+). It catalyses the reaction L-threonyl-[protein] + ATP = O-phospho-L-threonyl-[protein] + ADP + H(+). Its activity is regulated as follows. Activated by phosphorylation of Thr-236. Once activated, activity is stimulated by binding target proteins. Tumor suppressor serine/threonine-protein kinase involved in synaptic plasticity, centriole duplication and G1/S phase transition. Polo-like kinases act by binding and phosphorylating proteins that are already phosphorylated on a specific motif recognized by the POLO box domains. Phosphorylates CPAP, NPM1, RAPGEF2, RASGRF1, SNCA, SIPA1L1 and SYNGAP1. Plays a key role in synaptic plasticity and memory by regulating the Ras and Rap protein signaling: required for overactivity-dependent spine remodeling by phosphorylating the Ras activator RASGRF1 and the Rap inhibitor SIPA1L1 leading to their degradation by the proteasome. Conversely, phosphorylates the Rap activator RAPGEF2 and the Ras inhibitor SYNGAP1, promoting their activity. Also regulates synaptic plasticity independently of kinase activity, via its interaction with NSF that disrupts the interaction between NSF and the GRIA2 subunit of AMPARs, leading to a rapid rundown of AMPAR-mediated current that occludes long term depression. Required for procentriole formation and centriole duplication by phosphorylating CPAP and NPM1, respectively. Its induction by p53/TP53 suggests that it may participate in the mitotic checkpoint following stress. This Mus musculus (Mouse) protein is Serine/threonine-protein kinase PLK2 (Plk2).